The primary structure comprises 431 residues: Glutamate-1-semialdehyde 2,1-aminomutase (431 aa).

Lys-265 is subject to N6-(pyridoxal phosphate)lysine.

It belongs to the class-III pyridoxal-phosphate-dependent aminotransferase family. HemL subfamily. Homodimer. Pyridoxal 5'-phosphate is required as a cofactor.

It is found in the cytoplasm. It carries out the reaction (S)-4-amino-5-oxopentanoate = 5-aminolevulinate. It functions in the pathway porphyrin-containing compound metabolism; protoporphyrin-IX biosynthesis; 5-aminolevulinate from L-glutamyl-tRNA(Glu): step 2/2. The chain is Glutamate-1-semialdehyde 2,1-aminomutase from Pseudoalteromonas atlantica (strain T6c / ATCC BAA-1087).